A 231-amino-acid polypeptide reads, in one-letter code: MWRRVTSVSHLFSHSKSTKFNQGASTFKIWETFTSESEIPTPSKGSPFVTFVLGGPGSGKGTQCAKIVEAFGFTHVSAGDLLRREIASGSAYGSVILSTIREGKIVPSQVTVELIQKEMESSDNYKFLIDGFPRSEENRKAFEQTIGAEPDVVLFFDCPEQEMVKRVLNRNQGRVDDNIDTIKKRLEIFDELNWPVINYYSQRGKLHKINAVGTVDEIFEKVRPIFAPLSK.

57–62 (GSGKGT) is an ATP binding site. Positions 77–106 (SAGDLLRREIASGSAYGSVILSTIREGKIV) are NMP. A ribonucleoside 5'-phosphate-binding positions include Arg-83, 104 to 106 (KIV), and 131 to 134 (GFPR). Asn-138 contributes to the CMP binding site. The tract at residues 169-177 (NRNQGRVDD) is LID. Arg-170 provides a ligand contact to ATP. Residues Arg-174 and Arg-185 each coordinate a ribonucleoside 5'-phosphate. Residue Gly-213 participates in ATP binding.

It belongs to the adenylate kinase family. UMP-CMP kinase subfamily. Monomer. Mg(2+) serves as cofactor.

It is found in the cytoplasm. It localises to the nucleus. The catalysed reaction is CMP + ATP = CDP + ADP. It carries out the reaction dCMP + ATP = dCDP + ADP. It catalyses the reaction UMP + ATP = UDP + ADP. Functionally, catalyzes the phosphorylation of pyrimidine nucleoside monophosphates at the expense of ATP. Plays an important role in de novo pyrimidine nucleotide biosynthesis. Has preference for UMP and CMP as phosphate acceptors. The chain is UMP-CMP kinase from Prunus armeniaca (Apricot).